A 334-amino-acid chain; its full sequence is Dihydroorotate dehydrogenase (quinone) (334 aa).

FMN-binding positions include 61–65 and Thr-85; that span reads AGLDK. Position 65 (Lys-65) interacts with substrate. 110-114 provides a ligand contact to substrate; sequence NRMGF. Residues Asn-138 and Asn-171 each contribute to the FMN site. Asn-171 lines the substrate pocket. Ser-174 serves as the catalytic Nucleophile. Asn-176 serves as a coordination point for substrate. Lys-216 and Thr-244 together coordinate FMN. 245 to 246 is a substrate binding site; the sequence is NT. FMN is bound by residues Gly-266, Gly-295, and 316–317; that span reads YT.

The protein belongs to the dihydroorotate dehydrogenase family. Type 2 subfamily. As to quaternary structure, monomer. It depends on FMN as a cofactor.

It is found in the cell membrane. It carries out the reaction (S)-dihydroorotate + a quinone = orotate + a quinol. It functions in the pathway pyrimidine metabolism; UMP biosynthesis via de novo pathway; orotate from (S)-dihydroorotate (quinone route): step 1/1. Catalyzes the conversion of dihydroorotate to orotate with quinone as electron acceptor. This Idiomarina loihiensis (strain ATCC BAA-735 / DSM 15497 / L2-TR) protein is Dihydroorotate dehydrogenase (quinone).